Reading from the N-terminus, the 370-residue chain is Putative agmatine deiminase (370 aa).

Cysteine 361 serves as the catalytic Amidino-cysteine intermediate.

Belongs to the agmatine deiminase family.

It carries out the reaction agmatine + H2O = N-carbamoylputrescine + NH4(+). This Shewanella putrefaciens (strain CN-32 / ATCC BAA-453) protein is Putative agmatine deiminase.